The primary structure comprises 416 residues: 3-oxoacyl-[acyl-carrier-protein] synthase 1 (416 aa).

One can recognise a Ketosynthase family 3 (KS3) domain in the interval 11-415 (FPSVVVTAVT…GHNVALAFGR (405 aa)). Residues C171, H311, and H345 each act as for beta-ketoacyl synthase activity in the active site. 2 residues coordinate substrate: H311 and H345.

This sequence belongs to the thiolase-like superfamily. Beta-ketoacyl-ACP synthases family.

The protein resides in the cytoplasm. The catalysed reaction is an ultra-long-chain mono-unsaturated fatty acyl-[ACP] + malonyl-[ACP] + H(+) = a 3-oxo-ultra-long-chain mono-unsaturated fatty acyl-[ACP] + holo-[ACP] + CO2. It functions in the pathway lipid metabolism; mycolic acid biosynthesis. Part of the mycobacterial fatty acid elongation system FAS-II, which is involved in mycolic acid biosynthesis. Catalyzes the elongation of long chain acyl-ACP substrates by the addition of two carbons from malonyl-ACP to an acyl acceptor. Involved in the initial extension of the mycolate chain and forms monounsaturated fatty acids that averaged 40 carbons in length. The sequence is that of 3-oxoacyl-[acyl-carrier-protein] synthase 1 (kasA) from Mycobacterium leprae (strain TN).